The following is a 208-amino-acid chain: Ribosomal RNA large subunit methyltransferase E (208 aa).

S-adenosyl-L-methionine contacts are provided by Gly62, Trp64, Asp82, Asp98, and Asp123. Lys163 functions as the Proton acceptor in the catalytic mechanism.

Belongs to the class I-like SAM-binding methyltransferase superfamily. RNA methyltransferase RlmE family.

It is found in the cytoplasm. It catalyses the reaction uridine(2552) in 23S rRNA + S-adenosyl-L-methionine = 2'-O-methyluridine(2552) in 23S rRNA + S-adenosyl-L-homocysteine + H(+). In terms of biological role, specifically methylates the uridine in position 2552 of 23S rRNA at the 2'-O position of the ribose in the fully assembled 50S ribosomal subunit. In Actinobacillus pleuropneumoniae serotype 5b (strain L20), this protein is Ribosomal RNA large subunit methyltransferase E.